The following is a 730-amino-acid chain: Guanyl-specific ribonuclease pgl-1 (730 aa).

Residues 205–447 (KQLMLDGPKS…VTRIVESLEK (243 aa)) form an involved in dimerization region. The Proton acceptor role is filled by histidine 437. Polar residues-rich tracts occupy residues 452-472 (DTPSGRKSNVQPSTSQQQDSA) and 568-595 (DANQDTSSSASPEVAPSFSTDGWDSPTK). 3 disordered regions span residues 452–475 (DTPSGRKSNVQPSTSQQQDSAYTK), 567–639 (SDAN…TPMP), and 686–730 (GGRG…RGGF). Positions 674-730 (GGGRGGYGGGDRGGRGGYGGDRGGRGGYGGGDRGGRGGYGGDRGRGGYGGRGGRGGF) are RNA-binding RGG-box.

As to quaternary structure, homodimer. Interacts with pgl-2 and pgl-3; this association is not required for P-granule localization of either pgl-2 or pgl-3. Interacts with ife-1. Interacts with prmt-1; the interaction is direct. Interacts with nmad-1. Interacts with P granule components meg-1, meg-3 and meg-4. The cofactor is Does not require metal ions for catalytic activity.. Methylated at arginine residues in the RNA-binding RGG-box by prmt-1. Methylation promotes P-granule degradation by autophagy. In terms of tissue distribution, expressed in the germline. Expressed in most somatic cells.

The protein resides in the cytoplasmic granule. The enzyme catalyses [RNA] containing guanosine + H2O = an [RNA fragment]-3'-guanosine-3'-phosphate + a 5'-hydroxy-ribonucleotide-3'-[RNA fragment].. With respect to regulation, not inhibited by RNase inhibitor RNasin. Its function is as follows. Guanyl-specific endoribonuclease which cleaves the phosphodiester bond in single-stranded RNA between the 3'-guanylic residue and the 5'-OH residue of adjacent nucleotide, resulting in the formation of a corresponding 2',3'-cyclic phosphate intermediate. Together with the P-granule component pgl-3, is involved in the formation of P-granules. Together with pgl-3, probably recruits other granule components such as pos-1, mex-3 and glh-1 to P-granules. In addition, may act redundantly with pgl-3 to protect germ cells from excessive germline apoptosis during normal oogenesis and development of the two gonadal arms. This may in part be through regulating the localization of sir-2.1 which is involved in germ cell apoptosis. May protect somatic cells from excessive apoptosis during normal development. Essential role in male and female postembryonic germline development; maternally provided protein maintains a population of proliferating germ cells and zygotic expression is required for correct oogenesis. The sequence is that of Guanyl-specific ribonuclease pgl-1 from Caenorhabditis elegans.